The following is a 107-amino-acid chain: Large ribosomal subunit protein uL24 (107 aa).

It belongs to the universal ribosomal protein uL24 family. In terms of assembly, part of the 50S ribosomal subunit.

One of two assembly initiator proteins, it binds directly to the 5'-end of the 23S rRNA, where it nucleates assembly of the 50S subunit. Functionally, one of the proteins that surrounds the polypeptide exit tunnel on the outside of the subunit. In Thermoanaerobacter pseudethanolicus (strain ATCC 33223 / 39E) (Clostridium thermohydrosulfuricum), this protein is Large ribosomal subunit protein uL24.